The following is a 384-amino-acid chain: S-adenosylmethionine synthase (384 aa).

Residue H15 coordinates ATP. D17 lines the Mg(2+) pocket. E43 lines the K(+) pocket. Residues E56 and Q99 each coordinate L-methionine. The flexible loop stretch occupies residues Q99 to R109. Residues D164–K166, R230–F231, D239, R245–K246, A262, and K266 each bind ATP. Position 239 (D239) interacts with L-methionine. K270 serves as a coordination point for L-methionine.

Belongs to the AdoMet synthase family. Homotetramer; dimer of dimers. The cofactor is Mg(2+). K(+) serves as cofactor.

The protein localises to the cytoplasm. It carries out the reaction L-methionine + ATP + H2O = S-adenosyl-L-methionine + phosphate + diphosphate. The protein operates within amino-acid biosynthesis; S-adenosyl-L-methionine biosynthesis; S-adenosyl-L-methionine from L-methionine: step 1/1. In terms of biological role, catalyzes the formation of S-adenosylmethionine (AdoMet) from methionine and ATP. The overall synthetic reaction is composed of two sequential steps, AdoMet formation and the subsequent tripolyphosphate hydrolysis which occurs prior to release of AdoMet from the enzyme. This chain is S-adenosylmethionine synthase, found in Salmonella agona (strain SL483).